Consider the following 144-residue polypeptide: 3-dehydroquinate dehydratase (144 aa).

Tyr-24 acts as the Proton acceptor in catalysis. The substrate site is built by Asn-73, His-79, and Asp-86. The active-site Proton donor is His-99. Substrate is bound by residues 100–101 (LS) and Arg-110.

This sequence belongs to the type-II 3-dehydroquinase family. In terms of assembly, homododecamer.

The catalysed reaction is 3-dehydroquinate = 3-dehydroshikimate + H2O. The protein operates within metabolic intermediate biosynthesis; chorismate biosynthesis; chorismate from D-erythrose 4-phosphate and phosphoenolpyruvate: step 3/7. In terms of biological role, catalyzes a trans-dehydration via an enolate intermediate. The protein is 3-dehydroquinate dehydratase of Shewanella putrefaciens (strain CN-32 / ATCC BAA-453).